Reading from the N-terminus, the 491-residue chain is Cobyric acid synthase (491 aa).

One can recognise a GATase cobBQ-type domain in the interval 246–435; that stretch reads KIDVAVIKLP…IHGIFDGANF (190 aa). C327 functions as the Nucleophile in the catalytic mechanism. H427 is an active-site residue.

Belongs to the CobB/CobQ family. CobQ subfamily.

The protein operates within cofactor biosynthesis; adenosylcobalamin biosynthesis. Catalyzes amidations at positions B, D, E, and G on adenosylcobyrinic A,C-diamide. NH(2) groups are provided by glutamine, and one molecule of ATP is hydrogenolyzed for each amidation. This is Cobyric acid synthase from Clostridium acetobutylicum (strain ATCC 824 / DSM 792 / JCM 1419 / IAM 19013 / LMG 5710 / NBRC 13948 / NRRL B-527 / VKM B-1787 / 2291 / W).